The chain runs to 492 residues: Stomatal closure-related actin-binding protein 2 (492 aa).

Residues 112–132 adopt a coiled-coil conformation; that stretch reads LKKLRDALETMRGRMDGRNRE.

The protein belongs to the SCAB family. As to expression, expressed in roots, stems, leaves, siliques and flowers.

It localises to the cytoplasm. The protein resides in the cytoskeleton. In terms of biological role, probable plant-specific actin binding protein that bundles and stabilizes microfilaments (MFs). The chain is Stomatal closure-related actin-binding protein 2 from Arabidopsis thaliana (Mouse-ear cress).